Reading from the N-terminus, the 211-residue chain is uncharacterized protein (211 aa).

This is an uncharacterized protein from Archaeoglobus fulgidus (strain ATCC 49558 / DSM 4304 / JCM 9628 / NBRC 100126 / VC-16).